The following is a 121-amino-acid chain: Small ribosomal subunit protein uS13 (121 aa).

The tract at residues 95 to 121 (GLPVRGQKTKTNARTRKGKRKTVGAKS) is disordered.

This sequence belongs to the universal ribosomal protein uS13 family. Part of the 30S ribosomal subunit. Forms a loose heterodimer with protein S19. Forms two bridges to the 50S subunit in the 70S ribosome.

Functionally, located at the top of the head of the 30S subunit, it contacts several helices of the 16S rRNA. In the 70S ribosome it contacts the 23S rRNA (bridge B1a) and protein L5 of the 50S subunit (bridge B1b), connecting the 2 subunits; these bridges are implicated in subunit movement. Contacts the tRNAs in the A and P-sites. This is Small ribosomal subunit protein uS13 from Campylobacter jejuni subsp. jejuni serotype O:6 (strain 81116 / NCTC 11828).